The primary structure comprises 180 residues: NAD(P)H-quinone oxidoreductase subunit I, chloroplastic (180 aa).

4Fe-4S ferredoxin-type domains follow at residues 55 to 84 and 95 to 124; these read GRIH…VDWR and LNYS…MTEE. The [4Fe-4S] cluster site is built by C64, C67, C70, C74, C104, C107, C110, and C114.

It belongs to the complex I 23 kDa subunit family. As to quaternary structure, NDH is composed of at least 16 different subunits, 5 of which are encoded in the nucleus. [4Fe-4S] cluster serves as cofactor.

The protein resides in the plastid. The protein localises to the chloroplast thylakoid membrane. The enzyme catalyses a plastoquinone + NADH + (n+1) H(+)(in) = a plastoquinol + NAD(+) + n H(+)(out). It carries out the reaction a plastoquinone + NADPH + (n+1) H(+)(in) = a plastoquinol + NADP(+) + n H(+)(out). In terms of biological role, NDH shuttles electrons from NAD(P)H:plastoquinone, via FMN and iron-sulfur (Fe-S) centers, to quinones in the photosynthetic chain and possibly in a chloroplast respiratory chain. The immediate electron acceptor for the enzyme in this species is believed to be plastoquinone. Couples the redox reaction to proton translocation, and thus conserves the redox energy in a proton gradient. In Triticum aestivum (Wheat), this protein is NAD(P)H-quinone oxidoreductase subunit I, chloroplastic.